The primary structure comprises 101 residues: 2-amino-4-ketopentanoate thiolase alpha subunit (101 aa).

This sequence belongs to the OrtA family. Heterodimer with OrtB.

It catalyses the reaction D-alanine + acetyl-CoA = (2R)-2-amino-4-oxopentanoate + CoA. With respect to regulation, completely inhibited by p-chloromercuribenzoate (p-ClHgBzO) and acetyl-CoA, and partially inhibited by N-ethylmaleimide. Functionally, involved in the ornithine fermentation pathway. Catalyzes the thiolytic cleavage of 2-amino-4-ketopentanoate (AKP) with coenzyme A (CoA) to form acetyl-CoA and alanine. It is strictly specific for AKP. The chain is 2-amino-4-ketopentanoate thiolase alpha subunit from Acetoanaerobium sticklandii (strain ATCC 12662 / DSM 519 / JCM 1433 / CCUG 9281 / NCIMB 10654 / HF) (Clostridium sticklandii).